The sequence spans 1515 residues: Apolipophorin (1515 aa).

The VWFD domain occupies L952–P1118. A disulfide bridge links C976 with C1117. N988 is a glycosylation site (N-linked (GlcNAc...) asparagine).

In terms of tissue distribution, hemolymph.

It localises to the secreted. Functionally, mediates transport for various types of lipids in hemolymph. Acts by forming lipoprotein particles that bind lipoproteins and lipids. Binds the A.niger cell wall component alpha-1,3-glucan, a fungal pathogen-associated molecular pattern (PAMP) that activates the host immune response. This Galleria mellonella (Greater wax moth) protein is Apolipophorin.